Reading from the N-terminus, the 289-residue chain is Protein shisa-2 homolog (289 aa).

The N-terminal stretch at 1 to 27 (MWAGCHPDAASLLRLLLAALLAAGALA) is a signal peptide. Residues 28 to 104 (SGEYCHGWLD…RADKDGPDGS (77 aa)) are Extracellular-facing. Residues 81-102 (GCDNDRQQGAGEPGRADKDGPD) are disordered. Residues 105–125 (AVPIYVPFLIVGSVFVAFIVL) traverse the membrane as a helical segment. Residues 126 to 289 (GSLVAACCCR…EQKMYPAVTV (164 aa)) lie on the Cytoplasmic side of the membrane. Residues 162 to 198 (PSASTSRGSSSRQSSTAASSSSSANSGARAPPTRSQT) form a disordered region. Over residues 163 to 191 (SASTSRGSSSRQSSTAASSSSSANSGARA) the composition is skewed to low complexity.

The protein belongs to the shisa family.

The protein resides in the endoplasmic reticulum membrane. Functionally, plays an essential role in the maturation of presomitic mesoderm cells by individual attenuation of both FGF and WNT signaling. In Bos taurus (Bovine), this protein is Protein shisa-2 homolog (SHISA2).